An 82-amino-acid chain; its full sequence is Delta-actitoxin-Aeq2b 2 (82 aa).

The first 19 residues, 1–19, serve as a signal peptide directing secretion; it reads MNRLMILVFAAVFLALASA. The propeptide occupies 20-26; that stretch reads DEDVDIA. Cystine bridges form between Cys32–Cys79, Cys34–Cys69, and Cys62–Cys80.

The protein belongs to the sea anemone sodium channel inhibitory toxin family. Type I subfamily.

The protein localises to the secreted. It localises to the nematocyst. Binds specifically to voltage-gated sodium channels (Nav), thereby delaying their inactivation during signal transduction. Causes death to crabs. This chain is Delta-actitoxin-Aeq2b 2, found in Actinia equina (Beadlet anemone).